A 578-amino-acid chain; its full sequence is uncharacterized protein (578 aa).

This is an uncharacterized protein from Ostreid herpesvirus 1 (isolate France) (OsHV-1).